The primary structure comprises 60 residues: MAVPARHTSKAKKNKRRTHYKLTAPSVKFDETTGDYSRSHRVSLKGYYKGRKIAKANEAK.

Residues 1 to 21 form a disordered region; it reads MAVPARHTSKAKKNKRRTHYK. The segment covering 7–20 has biased composition (basic residues); the sequence is HTSKAKKNKRRTHY.

Belongs to the bacterial ribosomal protein bL32 family.

The chain is Large ribosomal subunit protein bL32 from Streptococcus equi subsp. zooepidemicus (strain H70).